We begin with the raw amino-acid sequence, 199 residues long: 7-methyl-GTP pyrophosphatase (199 aa).

Catalysis depends on aspartate 72, which acts as the Proton acceptor.

It belongs to the Maf family. YceF subfamily. A divalent metal cation is required as a cofactor.

The protein localises to the cytoplasm. The enzyme catalyses N(7)-methyl-GTP + H2O = N(7)-methyl-GMP + diphosphate + H(+). In terms of biological role, nucleoside triphosphate pyrophosphatase that hydrolyzes 7-methyl-GTP (m(7)GTP). May have a dual role in cell division arrest and in preventing the incorporation of modified nucleotides into cellular nucleic acids. This is 7-methyl-GTP pyrophosphatase from Alkalilimnicola ehrlichii (strain ATCC BAA-1101 / DSM 17681 / MLHE-1).